Consider the following 190-residue polypeptide: NADH-quinone oxidoreductase subunit B (190 aa).

Positions 39, 40, 104, and 135 each coordinate [4Fe-4S] cluster.

It belongs to the complex I 20 kDa subunit family. As to quaternary structure, NDH-1 is composed of 14 different subunits. Subunits NuoB, C, D, E, F, and G constitute the peripheral sector of the complex. [4Fe-4S] cluster is required as a cofactor.

It is found in the cell inner membrane. The catalysed reaction is a quinone + NADH + 5 H(+)(in) = a quinol + NAD(+) + 4 H(+)(out). In terms of biological role, NDH-1 shuttles electrons from NADH, via FMN and iron-sulfur (Fe-S) centers, to quinones in the respiratory chain. The immediate electron acceptor for the enzyme in this species is believed to be a menaquinone. Couples the redox reaction to proton translocation (for every two electrons transferred, four hydrogen ions are translocated across the cytoplasmic membrane), and thus conserves the redox energy in a proton gradient. This Prosthecochloris aestuarii (strain DSM 271 / SK 413) protein is NADH-quinone oxidoreductase subunit B.